The following is a 126-amino-acid chain: Large ribosomal subunit protein bL21 (126 aa).

Positions 105 to 126 are disordered; sequence KKPSVGPRAKRTKAAPAAEAAE.

As to quaternary structure, contacts protein L20. Part of the 50S ribosomal subunit.

This protein binds to 23S rRNA in the presence of protein L20. This chain is Large ribosomal subunit protein bL21, found in Rhodopseudomonas palustris (strain ATCC BAA-98 / CGA009).